The sequence spans 427 residues: Trigger factor (427 aa).

Positions 163 to 248 constitute a PPIase FKBP-type domain; the sequence is GDTVVIDFVG…VHEVKSKEVP (86 aa).

Belongs to the FKBP-type PPIase family. Tig subfamily.

It localises to the cytoplasm. The enzyme catalyses [protein]-peptidylproline (omega=180) = [protein]-peptidylproline (omega=0). Involved in protein export. Acts as a chaperone by maintaining the newly synthesized protein in an open conformation. Functions as a peptidyl-prolyl cis-trans isomerase. This chain is Trigger factor, found in Streptococcus uberis (strain ATCC BAA-854 / 0140J).